The sequence spans 314 residues: tRNA dimethylallyltransferase (314 aa).

8-15 contacts ATP; the sequence is GPTGAGKS. 10 to 15 contributes to the substrate binding site; that stretch reads TGAGKS.

The protein belongs to the IPP transferase family. In terms of assembly, monomer. Mg(2+) serves as cofactor.

It carries out the reaction adenosine(37) in tRNA + dimethylallyl diphosphate = N(6)-dimethylallyladenosine(37) in tRNA + diphosphate. In terms of biological role, catalyzes the transfer of a dimethylallyl group onto the adenine at position 37 in tRNAs that read codons beginning with uridine, leading to the formation of N6-(dimethylallyl)adenosine (i(6)A). The sequence is that of tRNA dimethylallyltransferase from Mycobacterium tuberculosis (strain ATCC 25177 / H37Ra).